The following is a 475-amino-acid chain: ATP synthase subunit beta, chloroplastic (475 aa).

Position 155–162 (155–162) interacts with ATP; the sequence is GGAGVGKT.

Belongs to the ATPase alpha/beta chains family. As to quaternary structure, F-type ATPases have 2 components, CF(1) - the catalytic core - and CF(0) - the membrane proton channel. CF(1) has five subunits: alpha(3), beta(3), gamma(1), delta(1), epsilon(1). CF(0) has four main subunits: a(1), b(1), b'(1) and c(9-12).

It is found in the plastid. Its subcellular location is the chloroplast thylakoid membrane. It carries out the reaction ATP + H2O + 4 H(+)(in) = ADP + phosphate + 5 H(+)(out). Functionally, produces ATP from ADP in the presence of a proton gradient across the membrane. The catalytic sites are hosted primarily by the beta subunits. The protein is ATP synthase subunit beta, chloroplastic of Ochrosphaera neapolitana.